We begin with the raw amino-acid sequence, 308 residues long: UDP-N-acetylenolpyruvoylglucosamine reductase (308 aa).

In terms of domain architecture, FAD-binding PCMH-type spans 32-197 (QTGGKADYYL…LEAAFTLAPG (166 aa)). The active site involves Arg-176. The active-site Proton donor is Ser-226. Residue Glu-296 is part of the active site.

It belongs to the MurB family. It depends on FAD as a cofactor.

The protein localises to the cytoplasm. The enzyme catalyses UDP-N-acetyl-alpha-D-muramate + NADP(+) = UDP-N-acetyl-3-O-(1-carboxyvinyl)-alpha-D-glucosamine + NADPH + H(+). It functions in the pathway cell wall biogenesis; peptidoglycan biosynthesis. Its function is as follows. Cell wall formation. The protein is UDP-N-acetylenolpyruvoylglucosamine reductase of Staphylococcus saprophyticus subsp. saprophyticus (strain ATCC 15305 / DSM 20229 / NCIMB 8711 / NCTC 7292 / S-41).